A 2798-amino-acid chain; its full sequence is Kinesin-like protein KIN-12F (2798 aa).

Residues 1 to 165 are disordered; the sequence is MVRDLAAVRR…RPPMSSGQRG (165 aa). 2 stretches are compositionally biased toward low complexity: residues 8–22 and 31–58; these read VRRTPARASTSSSAS and PVDASDAAVVEPEAAAARPPLLAIQPPQ. In terms of domain architecture, Kinesin motor spans 210–547; it reads NVQVVIRVRP…LKFAQRARLI (338 aa). Residue 291–298 coordinates ATP; it reads GQTGSGKT. The segment covering 600–615 has biased composition (acidic residues); it reads DVDDGTESMNMDEEND. The tract at residues 600–621 is disordered; the sequence is DVDDGTESMNMDEENDNDAHDR. Coiled-coil stretches lie at residues 792 to 835, 890 to 987, 1014 to 1108, 1281 to 1322, and 2130 to 2333; these read ELKR…HSSN, LAEE…HRRQ, LKRM…VMKE, QRAM…LKNE, and ELVD…VRQQ. The segment at 2338–2359 is disordered; the sequence is PSSGQATSSLEGGMGDFTDSSR. Coiled coils occupy residues 2361–2427 and 2545–2758; these read SREI…VKSD and ESKE…LKLK. Residues 2772 to 2798 form a disordered region; the sequence is RSESSSLSSGRSRSPSVCRSPSISSFR. The segment covering 2774 to 2798 has biased composition (low complexity); that stretch reads ESSSLSSGRSRSPSVCRSPSISSFR.

Belongs to the TRAFAC class myosin-kinesin ATPase superfamily. Kinesin family. KIN-12 subfamily.

This chain is Kinesin-like protein KIN-12F, found in Oryza sativa subsp. japonica (Rice).